We begin with the raw amino-acid sequence, 168 residues long: Transcription antitermination protein NusB (168 aa).

The protein belongs to the NusB family.

Involved in transcription antitermination. Required for transcription of ribosomal RNA (rRNA) genes. Binds specifically to the boxA antiterminator sequence of the ribosomal RNA (rrn) operons. The protein is Transcription antitermination protein NusB of Bradyrhizobium sp. (strain ORS 278).